A 154-amino-acid polypeptide reads, in one-letter code: MVKAIAVLKGDAGVSGVVHFEQEADAAVTTISWNITGFEPNTEHGFHIHEFGDVTNGCTSSGSHFNPFKKTHGSPEDENRHVGDMGNVLADANGVAVGSAKDPLIKIFGPTSILGRTVVVHAGKDDLGRGGNEESLKTGNAGPRPACGVIGIAN.

Histidine 47, histidine 49, and histidine 64 together coordinate Cu cation. Cysteine 58 and cysteine 147 form a disulfide bridge. The Zn(2+) site is built by histidine 64, histidine 72, histidine 81, and aspartate 84. Histidine 121 provides a ligand contact to Cu cation. Arginine 144 contacts substrate.

Belongs to the Cu-Zn superoxide dismutase family. Homodimer. The cofactor is Cu cation. Zn(2+) serves as cofactor.

The protein resides in the cytoplasm. The enzyme catalyses 2 superoxide + 2 H(+) = H2O2 + O2. Its function is as follows. Destroys radicals which are normally produced within the cells and which are toxic to biological systems. The chain is Superoxide dismutase [Cu-Zn] (SOD1) from Eremothecium gossypii (strain ATCC 10895 / CBS 109.51 / FGSC 9923 / NRRL Y-1056) (Yeast).